The primary structure comprises 528 residues: Equilibrative nucleoside transporter 4 (528 aa).

Residues 1 to 68 (MGSIGSQRLK…EEPVPDDRYH (68 aa)) are Extracellular-facing. A helical transmembrane segment spans residues 69 to 89 (AIYFAMLLAGVGFLLPYNSFI). The Cytoplasmic portion of the chain corresponds to 90–101 (TDVDYLHHKYPG). Residues 102–122 (TSIVFDMSLTYILVALAAVLL) form a helical membrane-spanning segment. The Extracellular portion of the chain corresponds to 123–139 (NNVVVERLNLHTRITTG). A helical membrane pass occupies residues 140–160 (YLLALGPLLFISICDVWLQLF). Residues 161 to 166 (SHDQAY) are Cytoplasmic-facing. The helical transmembrane segment at 167 to 187 (AINLAAVGTVAFGCTVQQSSF) threads the bilayer. Residues 188–231 (YGYTGLLPKRYTQGVMTGESTAGVMISLSRILTKLLLPDERAST) are Extracellular-facing. The helical transmembrane segment at 232–252 (IIFFLVSAGLELLCFLLHLLV) threads the bilayer. The Cytoplasmic segment spans residues 253 to 346 (RRSRFVLYYT…LLLHRYVVAR (94 aa)). A helical transmembrane segment spans residues 347 to 367 (VIWADMLSIAVTYFITLCLFP). At 368-376 (GLESEIRHC) the chain is on the extracellular side. A helical membrane pass occupies residues 377–397 (VLGEWLPILVMAVFNLSDFVG). At 398 to 411 (KILAALPVEWRGTH) the chain is on the cytoplasmic side. The helical transmembrane segment at 412 to 432 (LLACSCLRVVFIPLFILCVYP) threads the bilayer. Topologically, residues 433–445 (SGMPALRHPAWPC) are extracellular. A helical membrane pass occupies residues 446–466 (VFSLLMGISNGYFGSVPMILA). Topologically, residues 467-481 (AGKVSPKQRELAGNT) are cytoplasmic. Residues 482–504 (MTVSYMSGLTLGSAVAYCTYSLT) traverse the membrane as a helical segment. Topologically, residues 505–528 (RDAHGSCFQTATAAAANDSIPVGP) are extracellular. Asparagine 521 carries N-linked (GlcNAc...) asparagine glycosylation.

It belongs to the SLC29A/ENT transporter (TC 2.A.57) family. N-glycosylated. Expressed in heart. Expressed in choroid plexus.

It localises to the cell membrane. The protein localises to the apical cell membrane. It catalyses the reaction serotonin(out) = serotonin(in). It carries out the reaction dopamine(out) = dopamine(in). The enzyme catalyses (R)-noradrenaline(out) = (R)-noradrenaline(in). The catalysed reaction is (R)-adrenaline(out) = (R)-adrenaline(in). It catalyses the reaction histamine(out) = histamine(in). It carries out the reaction tyramine(in) = tyramine(out). The enzyme catalyses guanidine(out) = guanidine(in). The catalysed reaction is adenine(out) = adenine(in). It catalyses the reaction adenosine(in) = adenosine(out). With respect to regulation, activated at acidic pH. Electrogenic voltage-dependent transporter that mediates the transport of a variety of endogenous bioactive amines, cationic xenobiotics and drugs. Utilizes the physiologic inside-negative membrane potential as a driving force to facilitate cellular uptake of organic cations. Functions as a Na(+)- and Cl(-)-independent bidirectional transporter. Substrate transport is pH-dependent and enhanced under acidic condition, which is most likely the result of allosteric changes in the transporter structure. Implicated in monoamine neurotransmitters uptake such as serotonin, dopamine, adrenaline/epinephrine, noradrenaline/norepinephrine, histamine and tyramine, thereby supporting a role in homeostatic regulation of aminergic neurotransmission in the central nervous system. Also responsible for the uptake of bioactive amines and drugs through the blood-cerebrospinal fluid (CSF) barrier, from the CSF into choroid plexus epithelial cells, thereby playing a significant role in the clearance of cationic neurotoxins, xenobiotics and metabolic waste in the brain. Involved in bidirectional transport of the purine nucleoside adenosine and plays a role in the regulation of extracellular adenosine concentrations in cardiac tissues, in particular during ischemia. May be involved in organic cation uptake from the tubular lumen into renal tubular cells, thereby contributing to organic cation reabsorption in the kidney. Also transports adenine and guanidine. In Mus musculus (Mouse), this protein is Equilibrative nucleoside transporter 4.